Here is a 183-residue protein sequence, read N- to C-terminus: Translation initiation factor IF-3 (183 aa).

The protein belongs to the IF-3 family. As to quaternary structure, monomer.

It localises to the cytoplasm. Its function is as follows. IF-3 binds to the 30S ribosomal subunit and shifts the equilibrium between 70S ribosomes and their 50S and 30S subunits in favor of the free subunits, thus enhancing the availability of 30S subunits on which protein synthesis initiation begins. The chain is Translation initiation factor IF-3 from Yersinia enterocolitica serotype O:8 / biotype 1B (strain NCTC 13174 / 8081).